A 548-amino-acid chain; its full sequence is MAGTQDQSQDYFSKPTTPSTPGQAHLGNVANRIPSTIPDRESGTERAKSTHSRHRVLHGLPSTFMSYMSRRPVASSRGFSRVSSEGTASRPTAPQHSSHFHHYAPAEDGYYQENPWFGEADKKPIFSLGKPLPHKVRRKVLKPVRPDGKVDEEMAIVKEETTNEPHPGYASRTTSGQPYRVETQSSLPSRDIQRQQSRTTAAGVAHNDRRNDAGQPVFEYIPGEATPTPGHRDPASRVQSKQDNGHSPPDFKVDGEPLGHQEKPCVESGDTNANEMRNWWARLRARHPEPLAEFLATAVAIFLGLTGTLSVNLSATQSQPYGTYETSCWAWGFAWMFGIYLGGGVSGAHMNPAISVSLSIFRGFPWRQCVIYVFVQFIASIVAGALAYAMYADSINHVDPDMTKMSMTFFSTPREWVTLKSAFFNQVVGSAIMMIAVFALGDDQNNPPGAGMHALVLGFLVTTLKFTLGYNIGSALNPASDFGPRVIAYAVGFRGDNVFHSGWWFYGPWAATLIGSLLGCTLYDGFVFVGSESPVNFRVDKRVKKLFN.

Residues 1-22 are compositionally biased toward polar residues; that stretch reads MAGTQDQSQDYFSKPTTPSTPG. Disordered regions lie at residues 1–63, 76–101, and 158–270; these read MAGT…LPST, SRGFSRVSSEGTASRPTAPQHSSHFH, and KEET…ESGD. Topologically, residues 1–290 are cytoplasmic; it reads MAGTQDQSQD…ARLRARHPEP (290 aa). Positions 38-48 are enriched in basic and acidic residues; the sequence is PDRESGTERAK. Composition is skewed to polar residues over residues 77 to 97 and 171 to 200; these read RGFSRVSSEGTASRPTAPQHS and SRTTSGQPYRVETQSSLPSRDIQRQQSRTT. The segment covering 249 to 265 has biased composition (basic and acidic residues); that stretch reads PDFKVDGEPLGHQEKPC. Residues 291 to 311 form a helical membrane-spanning segment; that stretch reads LAEFLATAVAIFLGLTGTLSV. N-linked (GlcNAc...) asparagine glycosylation occurs at asparagine 312. Over 312–327 the chain is Extracellular; it reads NLSATQSQPYGTYETS. A helical membrane pass occupies residues 328-348; it reads CWAWGFAWMFGIYLGGGVSGA. Residues 349-369 lie on the Cytoplasmic side of the membrane; that stretch reads HMNPAISVSLSIFRGFPWRQC. The NPA 1 motif lies at 351-353; sequence NPA. A helical transmembrane segment spans residues 370–390; it reads VIYVFVQFIASIVAGALAYAM. Topologically, residues 391 to 420 are extracellular; the sequence is YADSINHVDPDMTKMSMTFFSTPREWVTLK. A helical membrane pass occupies residues 421–441; it reads SAFFNQVVGSAIMMIAVFALG. Topologically, residues 442 to 448 are cytoplasmic; it reads DDQNNPP. A helical membrane pass occupies residues 449–469; the sequence is GAGMHALVLGFLVTTLKFTLG. Over 470–508 the chain is Extracellular; sequence YNIGSALNPASDFGPRVIAYAVGFRGDNVFHSGWWFYGP. An NPA 2 motif is present at residues 477–479; that stretch reads NPA. The helical transmembrane segment at 509 to 529 threads the bilayer; sequence WAATLIGSLLGCTLYDGFVFV. The Cytoplasmic portion of the chain corresponds to 530–548; sequence GSESPVNFRVDKRVKKLFN.

This sequence belongs to the MIP/aquaporin (TC 1.A.8) family.

It is found in the membrane. It carries out the reaction H2O(in) = H2O(out). The enzyme catalyses glycerol(in) = glycerol(out). In terms of biological role, probable water/glycerol channel that may have redundant functions with FgAQP2. The polypeptide is Probable aquaglyceroporin-4 (Gibberella zeae (strain ATCC MYA-4620 / CBS 123657 / FGSC 9075 / NRRL 31084 / PH-1) (Wheat head blight fungus)).